Reading from the N-terminus, the 317-residue chain is Ceramide reductase (317 aa).

The signal sequence occupies residues 1 to 27 (MATDARGVVAITGATGFLGRHLVRALA).

This sequence belongs to the NAD(P)-dependent epimerase/dehydratase family.

Its subcellular location is the periplasm. The enzyme catalyses N-acyl-3-oxosphinganine + NADH + H(+) = an N-acylsphinganine + NAD(+). It participates in lipid metabolism; sphingolipid metabolism. In terms of biological role, involved in de novo bacterial ceramide synthesis. Catalyzes the reduction of bacterial oxidized ceramides to bacterial dihydroceramides. This chain is Ceramide reductase, found in Caulobacter vibrioides (strain NA1000 / CB15N) (Caulobacter crescentus).